We begin with the raw amino-acid sequence, 166 residues long: Ribosome maturation factor RimM (166 aa).

One can recognise a PRC barrel domain in the interval 90 to 163; it reads EGEFLVSQII…TVTIELLEGL (74 aa).

Belongs to the RimM family. Binds ribosomal protein uS19.

The protein localises to the cytoplasm. Functionally, an accessory protein needed during the final step in the assembly of 30S ribosomal subunit, possibly for assembly of the head region. Essential for efficient processing of 16S rRNA. May be needed both before and after RbfA during the maturation of 16S rRNA. It has affinity for free ribosomal 30S subunits but not for 70S ribosomes. The protein is Ribosome maturation factor RimM of Oenococcus oeni (strain ATCC BAA-331 / PSU-1).